Here is a 178-residue protein sequence, read N- to C-terminus: Dual-action ribosomal maturation protein DarP (178 aa).

A compositionally biased stretch (polar residues) spans 1 to 14; it reads MTVSDHPQTVSQPD. A disordered region spans residues 1-25; that stretch reads MTVSDHPQTVSQPDPESESRPSKTR.

Belongs to the DarP family.

Its subcellular location is the cytoplasm. Functionally, member of a network of 50S ribosomal subunit biogenesis factors which assembles along the 30S-50S interface, preventing incorrect 23S rRNA structures from forming. Promotes peptidyl transferase center (PTC) maturation. This Nitrosomonas europaea (strain ATCC 19718 / CIP 103999 / KCTC 2705 / NBRC 14298) protein is Dual-action ribosomal maturation protein DarP.